A 175-amino-acid polypeptide reads, in one-letter code: ATP synthase subunit delta (175 aa).

It belongs to the ATPase delta chain family. F-type ATPases have 2 components, F(1) - the catalytic core - and F(0) - the membrane proton channel. F(1) has five subunits: alpha(3), beta(3), gamma(1), delta(1), epsilon(1). F(0) has three main subunits: a(1), b(2) and c(10-14). The alpha and beta chains form an alternating ring which encloses part of the gamma chain. F(1) is attached to F(0) by a central stalk formed by the gamma and epsilon chains, while a peripheral stalk is formed by the delta and b chains.

The protein resides in the cell inner membrane. In terms of biological role, f(1)F(0) ATP synthase produces ATP from ADP in the presence of a proton or sodium gradient. F-type ATPases consist of two structural domains, F(1) containing the extramembraneous catalytic core and F(0) containing the membrane proton channel, linked together by a central stalk and a peripheral stalk. During catalysis, ATP synthesis in the catalytic domain of F(1) is coupled via a rotary mechanism of the central stalk subunits to proton translocation. Functionally, this protein is part of the stalk that links CF(0) to CF(1). It either transmits conformational changes from CF(0) to CF(1) or is implicated in proton conduction. This Xanthomonas oryzae pv. oryzae (strain PXO99A) protein is ATP synthase subunit delta.